We begin with the raw amino-acid sequence, 234 residues long: Sugar fermentation stimulation protein homolog (234 aa).

This sequence belongs to the SfsA family.

The chain is Sugar fermentation stimulation protein homolog from Pseudoalteromonas atlantica (strain T6c / ATCC BAA-1087).